Consider the following 330-residue polypeptide: Poly(3-hydroxyalkanoate) polymerase subunit PhaE (330 aa).

Residues 298–328 (RSEVDEIHQTIYQLRKEVKSLKKRLGETEAN) are a coiled coil.

Belongs to the PHA/PHB synthase family. Type III PhaE subfamily. As to quaternary structure, forms a heterodimer with PhaC, which may multimerize in the presence of 3-hydroxybutyryl-CoA. Both subunits are required for PHB synthesis in E.coli and in PHA-negative A.eutrophus.

It localises to the cytoplasm. It functions in the pathway biopolymer metabolism; poly-(R)-3-hydroxybutanoate biosynthesis. When expressed in E.coli with Synechocystis PhaC and C.necator PhaA and PhaB, confers the ability to synthesize up to 13% (w/w) poly(3-hydroxybutyrate) (PHB) depending on the carbon source; all 4 genes are necessary for PHB production. Cell-free in vitro coexpression with PhaE gives a heterodimer able to polymerize 3-hydroxybutyrate-CoA. This subunit has no catalytic activity but enhances the activity of PhaC, the catalytic subunit. The protein is Poly(3-hydroxyalkanoate) polymerase subunit PhaE of Synechocystis sp. (strain ATCC 27184 / PCC 6803 / Kazusa).